Reading from the N-terminus, the 221-residue chain is Probable GTP-binding protein EngB (221 aa).

The region spanning 37–219 (QGIEIALAGR…RAAIVKLLRE (183 aa)) is the EngB-type G domain. GTP is bound by residues 45-52 (GRSNVGKS), 72-76 (GRTQE), 97-100 (DMPG), 164-167 (TKTD), and 198-200 (TSS). Residues Ser52 and Thr74 each coordinate Mg(2+).

It belongs to the TRAFAC class TrmE-Era-EngA-EngB-Septin-like GTPase superfamily. EngB GTPase family. Mg(2+) serves as cofactor.

Necessary for normal cell division and for the maintenance of normal septation. This is Probable GTP-binding protein EngB from Afipia carboxidovorans (strain ATCC 49405 / DSM 1227 / KCTC 32145 / OM5) (Oligotropha carboxidovorans).